Consider the following 155-residue polypeptide: Large ribosomal subunit protein bL9c (155 aa).

This sequence belongs to the bacterial ribosomal protein bL9 family.

The protein resides in the plastid. Its subcellular location is the chloroplast. Its function is as follows. Binds to the 23S rRNA. This Porphyra purpurea (Red seaweed) protein is Large ribosomal subunit protein bL9c.